The primary structure comprises 361 residues: Ankyrin repeat domain-containing protein 16 (361 aa).

9 ANK repeats span residues 36–66 (AGDT…DIEA), 70–99 (DYKR…VVDS), 103–132 (ADWT…NPLL), 136–165 (DGWN…DAWK), 170–200 (IRRT…EPDC), 204–233 (CGVT…ACSS), 238–268 (MGAQ…DVDV), 273–302 (SQLT…DINS), and 306–335 (RNRS…KDSE).

As to quaternary structure, interacts with AARS; the interaction is direct. In terms of tissue distribution, widely expressed in brain (at protein level).

It is found in the cytoplasm. The protein localises to the nucleus. Required to prevent the misactivation of serine (Ser) with tRNA(Ala) by promoting the hydrolysis of Ser-mischarged tRNA(Ala), thereby playing a role in translational fidelity. Binds directly to the catalytic domain of AARS/AlaRS and captures Ser that is misactivated by AARS/AlaRS, preventing the charging of Ser adenylates to tRNA(Ala) and precluding Ser misincorporation in nascent peptides. The polypeptide is Ankyrin repeat domain-containing protein 16 (Mus musculus (Mouse)).